A 3291-amino-acid chain; its full sequence is MQKELSVALSCPGMKSLRTLLPLLVLLGATVPGSWGQAGSLDLQIDEEQPAGTLIGDISAGLPPGTAPPPMYFISAQEGSGVGTDLAIDEHSGVVRTARVLDRERRDRYRFTAVTPDGATVEVTVRVADINDHAPAFPQARAALQIPEHTALGTRYPLEPARDADAGRLGTQGYALSGDGAGETFRLETRPGPGGAPVPELVIAGELDRENRSHYMLQLEAYDGGSPPRRAQALLDVTLLDINDHAPAFNQSRYHAVVSESLAPGSPVLQVFASDADAGANGAVTYEINRRQSEGDGPFSIDAHTGFLRLERPLDFEQRRVHELVVQARDGGAHPELGSAFVTVHVRDANDNQPSMTVIFLSADGSPRVSEAAPPGQLVARISVSDPDDGDFAHVNVSLEGGEGHFALSTQDSVIYLVCVARRLDREERDVYNLRVTATDSGSPPLRAEAAFVLHVTDVNDNAPAFDRQLYRPEPLPEVALPGSFVVRVTARDPDQGTNGQITYSLAPGTHTHWFSIDPTSGIITTAATLDYELEPQPQLIVVATDGGLPPLVSSATVSVALQDVNDNEPQFQRTFYNASLPEGTQPGTCFLQVTATDADSGPFGLLSYSLGAGLGASGSPPFRIDAHSGDVCTTRTLDRDQGPSSFDFTVTAIDGGGLKSMVYVKVFVADENDNPPQFYPREYAASLSAQSTPGTAVLRVHAHDPDQGPHGRLSYHILAGNSPPLFALDAHSGLLTVAWPLGRRANSVVQLEIGAQDGGGLQAEPIARVNISIVPGTPTPPIFEQLQYVFSVPEDVAPGTSVGIIQAHNPPGRLGPVTLTLSGGDPRGLFSLDSPSGLLKTLRPLDRELLGPVLELEVRAGSGTPPVFAVARIRVLLDDVNDNSPAFPAPEDTVLLPQNTAPGTPIYTLRALDPDSGANSRITFNLLAGGDGLFTVDPTTGHVRLMGPLGPPGGPAHELEVEARDGGSPPRTSHFRLRVVIQDLGIHGLAPRFDSPTYRVDLPSGTTTGTQILQVQAQAPDGSPVTYHLAADGASSPFGLESQSGWLWVRTALDRESQELYTLKVMAVSGSKAELGQQTGTATVRVIILNQNDHSPRLSEEPTFLAVAENQPPGTSVGRVFATDRDSGPNGRLTYSLQQLSEDSKAFRIHPQTGEVTTLQTLDREQQSSFQLLVQVQDGGSPPRSATGTVHVAVLDLNDNSPTFLQASGAAGGGLPIQVPDRVPPGTLVTTLQAKDPDEGENGTILYTLTGPGSELFSLHPHTGELHTAASLVRAERPHYVLTLSAHDQGSPPRSASLQLLVQVLPSTRVVESPDLIEADSAATVPVVLTVTAAEGLRPGSLLGSVAPQEPASVGVLTYTLVGGADPEGTFALDSASGRLYLARPLDFEAGPAWRALTVRAEGPGGAGARLLRVQVRVQDENEHAPTFARDPLALALPENPDPGATLYTFRASDADGPGPNSEVRYRLLRQEPPVPALRLDARTGALSAPRGLDRETTPALLLLVEATDRPANASRRRAARVSARVFVTDENDNAPVFASPSRVRLPEDQPPGPAALHVVARDPDLGEAARVSYRLAAGGDGHFRLHATTGALSVVRPLDREQRAEHVLTVVALDHGSPPRSSTQLLTVSVVDVNDEAPAFPQQEYNVILRENSPPGTSLLTLKATDPDLGANGQVTYGGVSGESFSLDPNTGVLTTLRALDREEQEEIYLTVYARDRGLPPLLTHITVRVTVEDENDHTPTFGNTHLSLEVPEGQDPQTLTTLRASDPDGGLNGQLQYRILDGDSSGAFALDLTSGEFGTMRPLDREVEPAFQLQIEARDGGQPALSATLLVTVTVLDANDHAPVFPVPSYSVEVPEDAPVGTLLLQLQAHDPDDGDNGRVMYYLGAGTAGAFLLEPTSGELSTATALDREHCASYAFSVTAVDGAAAGPLSTTVPITITVRDVNDHAPAFPTSPLRLRLPRPGPSLNKPTLALATLRAEDRDAGANASILYRLAGTPPPGTTVDSYTGEIRVARSPVALGPQDRVLFIVATDLGRPARSATGVVVVGIQGEPERGPRFPRTSSEAVLRENAPPGTPVISPKAVHSGGSNGPITYSILSGNERGIFSIQPSTGAITVRSAEGLDFETSPRLRLVLQAESGGAFAFSVLTLTLQDANDNAPRFLRPHYVAFLPESRPLEGPLLQVEADDLDQGSGGQISYSLAASQPARGLFHVDPATGTITTTAILDREIWAETRLVLMATDRGSPALVGSATLTVMVIDTNDNRPTIPQPWELRVSEDALLGSEIAQVTGNDVDSGPVLWYVLSPSGPQDPFSIGRYGGRVSLTGPLDFEQCDHYHLQLLAHDGPHEGHANLTVLVEDVNDNVPTFSQSLYQVMMLEHTPPGSAILSVSATDRDSGANGHISYHLASPAEGFRVDPNNGTLFTTVGAMALGHEGPGVVDVVLEARDHGAPGRTAQATVHVQLKDQNDHAPSFTLPHYRVAVSEDLPPGSTLLTLEATDADGSRTHATVDYSIISGNRGRVFQLEPRLAEVGDGVGPGPQALGCLVLLEPLDFESLTQYNLTVAAADRGQPPRSSAVPVTVTVLDVNDNPPVFTRASYRVTVPEDMPVGAELLHVEASDADPGPHGLVHFTLSSGDPLGLFELDENSGALRLSRPLDCETQAQHQLVVQAADPAGTHFSLVPVTVEVQDVNDHGPAFPLSLLSTSLAENQPPGTLVTTLHAIDGDAGTFGRLRYSLLEAVPGPEGREAFSLNSSTGELRARVPFDYEHTGSFRLLVGAADAGNLSASVTVSVLITGEDEYDPVFLAPSFHFQVPEGAQRGHSLGHVQATDEDGGADGLVLYSLATSSPYFGINQTTGALYLRVDSRAPGSGTTTSGGGGRTRREAPRELRLEVVARGPLPGSRSATVPVTVDITHTALGLAPDLNLLLVGAVAASLGVVVVLALAALVLGLVRARSRKAEAAPGPMSQTAPIASSSLQKLGREPPSPPPSEHLYHQTLPSYGGPGAGGPYPRGGSLDPSHSSGRGSAEAAEDDEIRMINEFPRVASVASSLAARGPDSGIQQDADGLSDTSCEPPAPDTWYKGRKAGLLLPGAGATLYREEGPPATATAFLGGCGLSPAPAGDYGFPADGKPCVAGALTAIVAGEEELRGSYNWDYLLSWCPQFQPLASVFTEIARLKDEARPCPPAPRIDPPPLITAVAHPGAKSVPPKPASTAVARAIFPPASHRSPISHEGSLSSAAMSPSFSPSLSPLAARSPVVSPFGVAQGPSASALSTESGLEPPDDTELRI.

Residues 1-35 (MQKELSVALSCPGMKSLRTLLPLLVLLGATVPGSW) form the signal peptide. The Extracellular portion of the chain corresponds to 36–2933 (GQAGSLDLQI…PDLNLLLVGA (2898 aa)). 27 consecutive Cadherin domains span residues 37 to 137 (QAGS…APAF), 138 to 249 (PQAR…APAF), 250 to 356 (NQSR…QPSM), 369 to 466 (VSEA…APAF), 476 to 572 (LPEV…EPQF), 573 to 679 (QRTF…PPQF), 680 to 784 (YPRE…PPIF), 785 to 888 (EQLQ…SPAF), 889 to 994 (PAPE…APRF), 995 to 1105 (DSPT…EPTF), 1100 to 1205 (SEEP…SPTF), 1218 to 1317 (IQVP…SPDL), 1326 to 1429 (VPVV…APTF), 1430 to 1539 (ARDP…APVF), 1539 to 1642 (FASP…APAF), 1643 to 1744 (PQQE…TPTF), 1745 to 1848 (GNTH…APVF), 1849 to 1953 (PVPS…APAF), 1976 to 2061 (LATL…GPRF), 2062 to 2164 (PRTS…APRF), 2165 to 2270 (LRPH…RPTI), 2270 to 2369 (IPQP…VPTF), 2370 to 2475 (SQSL…APSF), 2476 to 2595 (TLPH…PPVF), 2596 to 2699 (TRAS…GPAF), 2700 to 2806 (PLSL…DPVF), and 2807 to 2926 (LAPS…APDL). The N-linked (GlcNAc...) asparagine glycan is linked to N396. N-linked (GlcNAc...) asparagine glycosylation occurs at N2354. Residues 2867–2886 (SRAPGSGTTTSGGGGRTRRE) form a disordered region. A helical membrane pass occupies residues 2934-2954 (VAASLGVVVVLALAALVLGLV). The Cytoplasmic portion of the chain corresponds to 2955-3291 (RARSRKAEAA…EPPDDTELRI (337 aa)). The segment at 2978–3033 (SLQKLGREPPSPPPSEHLYHQTLPSYGGPGAGGPYPRGGSLDPSHSSGRGSAEAAE) is disordered. Positions 3004-3013 (GGPGAGGPYP) are enriched in gly residues. S3048 is subject to Phosphoserine. 2 disordered regions span residues 3051–3081 (SSLAARGPDSGIQQDADGLSDTSCEPPAPDT) and 3226–3291 (ASHR…ELRI). The span at 3237–3259 (SLSSAAMSPSFSPSLSPLAARSP) shows a compositional bias: low complexity. Residues 3270–3279 (PSASALSTES) are compositionally biased toward polar residues.

In terms of assembly, heterophilic interaction with FAT4; this interaction affects their respective protein levels. Expressed in the epicardium and atrioventricular sulcus (at protein level).

The protein localises to the cell membrane. Calcium-dependent cell-adhesion protein. Mediates functions in neuroprogenitor cell proliferation and differentiation. In the heart, has a critical role for proper morphogenesis of the mitral valve, acting in the regulation of cell migration involved in valve formation. The polypeptide is Protocadherin-16 (Dchs1) (Mus musculus (Mouse)).